Reading from the N-terminus, the 286-residue chain is 3-amino-tetrahydro-pyrrolizinone reductase (286 aa).

The active-site Proton acceptor is the Tyr146.

Belongs to the short-chain dehydrogenases/reductases (SDR) family.

The catalysed reaction is 3-amino-5,6,7,7a-tetrahydro-1H-pyrrolizin-1-one + AH2 = 3-amino-tetrahydro-1H-pyrrolizin-1-ol + A. Involved in the biosynthetic pathway of pyrrolizwilline, a pyrrolizidine alkaloid. Catalyzes the reduction of 3-amino-tetrahydro-pyrrolizinone to 3-amino-tetrahydro-pyrrolizinol. The protein is 3-amino-tetrahydro-pyrrolizinone reductase (xhpD) of Xenorhabdus hominickii.